Consider the following 360-residue polypeptide: DNA replication and repair protein RecF (360 aa).

Position 30 to 37 (30 to 37 (GNNGSGKT)) interacts with ATP.

It belongs to the RecF family.

The protein resides in the cytoplasm. The RecF protein is involved in DNA metabolism; it is required for DNA replication and normal SOS inducibility. RecF binds preferentially to single-stranded, linear DNA. It also seems to bind ATP. This chain is DNA replication and repair protein RecF, found in Mannheimia succiniciproducens (strain KCTC 0769BP / MBEL55E).